Consider the following 325-residue polypeptide: GPI-linked NAD(P)(+)--arginine ADP-ribosyltransferase 1 (325 aa).

The signal sequence occupies residues 1 to 22; sequence MKIPAMMSLLLVSVGLRDGVQV. Disulfide bonds link Cys-53–Cys-272 and Cys-169–Cys-219. Residue Asn-65 is glycosylated (N-linked (GlcNAc...) asparagine). Residues 73 to 268 form the TR mART core domain; it reads KVYADGWAQA…IYLRALGKRS (196 aa). Tyr-117 and Arg-174 together coordinate NAD(+). Catalysis depends on residues Arg-174 and Ser-197. Ser-228 is an NAD(+) binding site. Glu-235 is an active-site residue. A glycan (N-linked (GlcNAc...) asparagine) is linked at Asn-248. Ser-290 carries GPI-anchor amidated serine lipidation. Positions 291–325 are cleaved as a propeptide — removed in mature form; that stretch reads APGSISASCSLLLLLLFLVLSALPENPGLQQLTRC.

This sequence belongs to the Arg-specific ADP-ribosyltransferase family. As to expression, abundantly expressed in cardiac and skeletal muscle. Low levels also found in lung.

Its subcellular location is the sarcoplasmic reticulum membrane. The catalysed reaction is L-arginyl-[protein] + NAD(+) = N(omega)-(ADP-D-ribosyl)-L-arginyl-[protein] + nicotinamide + H(+). Its function is as follows. Has ADP-ribosyltransferase activity toward GLP1R. The protein is GPI-linked NAD(P)(+)--arginine ADP-ribosyltransferase 1 (Art1) of Mus musculus (Mouse).